The primary structure comprises 115 residues: Phosphoribosyl-AMP cyclohydrolase (115 aa).

Asp80 lines the Mg(2+) pocket. Position 81 (Cys81) interacts with Zn(2+). Mg(2+)-binding residues include Asp82 and Asp84. Residues Cys97 and Cys104 each coordinate Zn(2+).

It belongs to the PRA-CH family. Homodimer. Mg(2+) is required as a cofactor. It depends on Zn(2+) as a cofactor.

It localises to the cytoplasm. It catalyses the reaction 1-(5-phospho-beta-D-ribosyl)-5'-AMP + H2O = 1-(5-phospho-beta-D-ribosyl)-5-[(5-phospho-beta-D-ribosylamino)methylideneamino]imidazole-4-carboxamide. The protein operates within amino-acid biosynthesis; L-histidine biosynthesis; L-histidine from 5-phospho-alpha-D-ribose 1-diphosphate: step 3/9. In terms of biological role, catalyzes the hydrolysis of the adenine ring of phosphoribosyl-AMP. This is Phosphoribosyl-AMP cyclohydrolase from Mycolicibacterium gilvum (strain PYR-GCK) (Mycobacterium gilvum (strain PYR-GCK)).